Consider the following 327-residue polypeptide: Guanine nucleotide-binding protein subunit beta-like protein 1 (327 aa).

7 WD repeats span residues 16-54 (LRGTQSPVHALHFCEGAQAQGRPLLFSGSQSGLVHIWSL), 58-97 (RAVTTLDGHGGQCVTWLQTLPQGRQLLSQGRDLKLCLWDL), 103-145 (AVVD…ILEM), 153-195 (ALKP…LWDV), 200-237 (VCSRIACHEEPVMDLDFDSQKARGISGSAGKALAVWSL), 242-282 (ALQV…VFHW), and 286-323 (QPLAVLAFHSAAVQCVAFTADGLLAAGSKDQRISLWSL).

In terms of tissue distribution, ubiquitous. Highly expressed in heart, liver, skeletal muscle, kidney, spleen, thymus and pancreas. Detected at low levels in lung, placenta and brain.

It localises to the cytoplasm. The protein resides in the nucleus. Acts as a critical regulator of DNA damage response (DDR) signaling via specifically regulating phosphatidylinositol 3-kinase-related protein kinase (PIKK) family proteins. The polypeptide is Guanine nucleotide-binding protein subunit beta-like protein 1 (Homo sapiens (Human)).